We begin with the raw amino-acid sequence, 153 residues long: MPLKFWKRLMPPKKKSSETLTLLSNQEPLSMQDPPLVRSSTRSSIYPPVIKKGEHRAKTKRNQELAEQLLKELPHETTSIANLVQRNNRDLDYNLEQLVRTLLQMEKEGTHVTESLINTLMETDTLTPKEQALIWPAYNLVRQMMHHAALHHI.

The disordered stretch occupies residues 16 to 42 (SSETLTLLSNQEPLSMQDPPLVRSSTR). A compositionally biased stretch (polar residues) spans 18-29 (ETLTLLSNQEPL).

The chain is Protein C (P/V/C) from Tupaia paramyxovirus (TPMV).